A 357-amino-acid chain; its full sequence is Phosphoserine aminotransferase (357 aa).

Arg41 serves as a coordination point for L-glutamate. Pyridoxal 5'-phosphate-binding positions include 76–77, Trp102, Thr152, Asp171, and Gln194; that span reads GT. Position 195 is an N6-(pyridoxal phosphate)lysine (Lys195). 235–236 is a binding site for pyridoxal 5'-phosphate; the sequence is NT.

It belongs to the class-V pyridoxal-phosphate-dependent aminotransferase family. SerC subfamily. In terms of assembly, homodimer. Pyridoxal 5'-phosphate is required as a cofactor.

Its subcellular location is the cytoplasm. The enzyme catalyses O-phospho-L-serine + 2-oxoglutarate = 3-phosphooxypyruvate + L-glutamate. The catalysed reaction is 4-(phosphooxy)-L-threonine + 2-oxoglutarate = (R)-3-hydroxy-2-oxo-4-phosphooxybutanoate + L-glutamate. Its pathway is amino-acid biosynthesis; L-serine biosynthesis; L-serine from 3-phospho-D-glycerate: step 2/3. Its function is as follows. Catalyzes the reversible conversion of 3-phosphohydroxypyruvate to phosphoserine and of 3-hydroxy-2-oxo-4-phosphonooxybutanoate to phosphohydroxythreonine. The chain is Phosphoserine aminotransferase from Limosilactobacillus fermentum (strain NBRC 3956 / LMG 18251) (Lactobacillus fermentum).